The chain runs to 109 residues: ATP-dependent Clp protease adapter protein ClpS (109 aa).

The interval 1–20 (MAERKQGGQGNGVGSSVVTE) is disordered.

The protein belongs to the ClpS family. In terms of assembly, binds to the N-terminal domain of the chaperone ClpA.

Functionally, involved in the modulation of the specificity of the ClpAP-mediated ATP-dependent protein degradation. The polypeptide is ATP-dependent Clp protease adapter protein ClpS (Caulobacter vibrioides (strain NA1000 / CB15N) (Caulobacter crescentus)).